Consider the following 302-residue polypeptide: Uroporphyrinogen-III synthase, chloroplastic (302 aa).

A disordered region spans residues 1–39 (MALSSSSHLLPFSRPPATFPRARHAGGGRGRAGATGRFI). The transit peptide at 1–50 (MALSSSSHLLPFSRPPATFPRARHAGGGRGRAGATGRFIACSSPPPPDVV) directs the protein to the chloroplast.

The protein belongs to the uroporphyrinogen-III synthase family.

It localises to the plastid. It is found in the chloroplast. It catalyses the reaction hydroxymethylbilane = uroporphyrinogen III + H2O. Its pathway is porphyrin-containing compound metabolism; protoporphyrin-IX biosynthesis; coproporphyrinogen-III from 5-aminolevulinate: step 3/4. Its function is as follows. Catalyzes cyclization of the linear tetrapyrrole, hydroxymethylbilane, to the macrocyclic uroporphyrinogen III, a precursor of tetrapyrroles such as chlorophyll, heme and phycobilins. The sequence is that of Uroporphyrinogen-III synthase, chloroplastic (UROS) from Oryza sativa subsp. japonica (Rice).